A 227-amino-acid chain; its full sequence is Cytochrome c oxidase subunit 2 (227 aa).

At 1–14 the chain is on the mitochondrial intermembrane side; the sequence is MAYPFQLGLQDATS. Residues 15–45 traverse the membrane as a helical segment; the sequence is PIMEELLHFHDHTLMIVFLISSLVLYIISLM. Residues 46 to 59 are Mitochondrial matrix-facing; sequence LTTKLTHTSTMDAQ. The helical transmembrane segment at 60 to 87 threads the bilayer; sequence EVETVWTILPAIILILIALLSLRILYMM. Residues 88-227 are Mitochondrial intermembrane-facing; the sequence is DEINNPFLTM…YFETWSALMV (140 aa). Residues His161, Cys196, Glu198, Cys200, His204, and Met207 each coordinate Cu cation. Glu198 contributes to the Mg(2+) binding site. Tyr218 is subject to Phosphotyrosine.

This sequence belongs to the cytochrome c oxidase subunit 2 family. In terms of assembly, component of the cytochrome c oxidase (complex IV, CIV), a multisubunit enzyme composed of 14 subunits. The complex is composed of a catalytic core of 3 subunits MT-CO1, MT-CO2 and MT-CO3, encoded in the mitochondrial DNA, and 11 supernumerary subunits COX4I, COX5A, COX5B, COX6A, COX6B, COX6C, COX7A, COX7B, COX7C, COX8 and NDUFA4, which are encoded in the nuclear genome. The complex exists as a monomer or a dimer and forms supercomplexes (SCs) in the inner mitochondrial membrane with NADH-ubiquinone oxidoreductase (complex I, CI) and ubiquinol-cytochrome c oxidoreductase (cytochrome b-c1 complex, complex III, CIII), resulting in different assemblies (supercomplex SCI(1)III(2)IV(1) and megacomplex MCI(2)III(2)IV(2)). Found in a complex with TMEM177, COA6, COX18, COX20, SCO1 and SCO2. Interacts with TMEM177 in a COX20-dependent manner. Interacts with COX20. Interacts with COX16. The cofactor is Cu cation.

It is found in the mitochondrion inner membrane. It carries out the reaction 4 Fe(II)-[cytochrome c] + O2 + 8 H(+)(in) = 4 Fe(III)-[cytochrome c] + 2 H2O + 4 H(+)(out). In terms of biological role, component of the cytochrome c oxidase, the last enzyme in the mitochondrial electron transport chain which drives oxidative phosphorylation. The respiratory chain contains 3 multisubunit complexes succinate dehydrogenase (complex II, CII), ubiquinol-cytochrome c oxidoreductase (cytochrome b-c1 complex, complex III, CIII) and cytochrome c oxidase (complex IV, CIV), that cooperate to transfer electrons derived from NADH and succinate to molecular oxygen, creating an electrochemical gradient over the inner membrane that drives transmembrane transport and the ATP synthase. Cytochrome c oxidase is the component of the respiratory chain that catalyzes the reduction of oxygen to water. Electrons originating from reduced cytochrome c in the intermembrane space (IMS) are transferred via the dinuclear copper A center (CU(A)) of subunit 2 and heme A of subunit 1 to the active site in subunit 1, a binuclear center (BNC) formed by heme A3 and copper B (CU(B)). The BNC reduces molecular oxygen to 2 water molecules using 4 electrons from cytochrome c in the IMS and 4 protons from the mitochondrial matrix. The chain is Cytochrome c oxidase subunit 2 (MT-CO2) from Nyctereutes procyonoides (Raccoon dog).